Consider the following 524-residue polypeptide: Probable aminopeptidase NPEPL1 (524 aa).

The Zn(2+) site is built by K260 and D265. K272 is an active-site residue. Zn(2+)-binding residues include D283, D342, and E344. R346 is an active-site residue.

Belongs to the peptidase M17 family. It depends on Zn(2+) as a cofactor. Mn(2+) serves as cofactor.

Functionally, probably catalyzes the removal of unsubstituted N-terminal amino acids from various peptides. This is Probable aminopeptidase NPEPL1 (Npepl1) from Mus musculus (Mouse).